The sequence spans 688 residues: NADH-ubiquinone oxidoreductase 75 kDa subunit (688 aa).

The region spanning Met-1 to Glu-85 is the 2Fe-2S ferredoxin-type domain. The [2Fe-2S] cluster site is built by Cys-38, Cys-49, Cys-52, and Cys-66. The 4Fe-4S His(Cys)3-ligated-type domain maps to Glu-85–Gly-124. 8 residues coordinate [4Fe-4S] cluster: His-101, Cys-105, Cys-108, Cys-114, Cys-153, Cys-156, Cys-159, and Cys-204. In terms of domain architecture, 4Fe-4S Mo/W bis-MGD-type spans Leu-223–Glu-279.

This sequence belongs to the complex I 75 kDa subunit family. Complex I is composed of about 45 different subunits. Requires [2Fe-2S] cluster as cofactor. [4Fe-4S] cluster serves as cofactor.

The protein resides in the mitochondrion inner membrane. The enzyme catalyses a ubiquinone + NADH + 5 H(+)(in) = a ubiquinol + NAD(+) + 4 H(+)(out). Core subunit of the mitochondrial membrane respiratory chain NADH dehydrogenase (Complex I) that is believed to belong to the minimal assembly required for catalysis. Complex I functions in the transfer of electrons from NADH to the respiratory chain. The immediate electron acceptor for the enzyme is believed to be ubiquinone. This is the largest subunit of complex I and it is a component of the iron-sulfur (IP) fragment of the enzyme. It may form part of the active site crevice where NADH is oxidized. The sequence is that of NADH-ubiquinone oxidoreductase 75 kDa subunit (nad11) from Dictyostelium citrinum (Slime mold).